A 309-amino-acid polypeptide reads, in one-letter code: Olfactory receptor 8A1 (309 aa).

At 1–28 (MTAENQSTVTEFILGGLTNRPELQLPLF) the chain is on the extracellular side. Residues 29-49 (LLFLGIYVVTMVGNLGMITLI) traverse the membrane as a helical segment. Topologically, residues 50–56 (GLNSQLH) are cytoplasmic. A helical transmembrane segment spans residues 57 to 77 (TPMYFFLSNLSLVDLCYSSVI). Residues 78-90 (TPKMLINFVSQRN) are Extracellular-facing. The helical transmembrane segment at 91–111 (LISYVGCMSQLYFFLVFVIAE) threads the bilayer. Residues Cys97 and Cys188 are joined by a disulfide bond. Topologically, residues 112–133 (CYMLTVMAYDRYVAICQPLLYN) are cytoplasmic. A helical membrane pass occupies residues 134-154 (IIMSPALCSLLVAFVYAVGLI). Residues 155–195 (GSAIETGLMLKLNYCEDLISHYFCDILPLMKLSCSSTYDVE) lie on the Extracellular side of the membrane. The chain crosses the membrane as a helical span at residues 196–216 (MAVFFLAGFDIIVTSLTVLIS). Topologically, residues 217-238 (YAFILSSILRISSNEGRSKAFS) are cytoplasmic. The chain crosses the membrane as a helical span at residues 239-259 (TCSSHFAAVGLFYGSTAFMYL). At 260–270 (KPSTASSLAQE) the chain is on the extracellular side. Residues 271-291 (NVASVFYTTVIPMFNPLIYSL) form a helical membrane-spanning segment. Residues 292–309 (RNKEVKTALDKTLRRKVF) are Cytoplasmic-facing.

Belongs to the G-protein coupled receptor 1 family.

The protein resides in the cell membrane. Functionally, odorant receptor. This is Olfactory receptor 8A1 from Mus musculus (Mouse).